A 388-amino-acid chain; its full sequence is MDLFEYQAKKLFAEHGVPVPTGKTATTPEEARAIATELGGRVVVKAQVKTGGRGKAGGVKVADGPDDAFAKATAILGMDIKGHTVHSVLVEEASNIAEEYYASFLLDRANRTFLAMASREGGMEIEEVAATKPEALARIAIDPLKGVDAAKAREIAVAAKLPEAALDGASELLAKLWTVFVKSDATLVEVNPLILTGDGRVVALDGKVSLDDNADFRHPEHEAFVDVAAVDPLEQKAKEKGLNYVKLEGEVGIIGNGAGLVMSTLDVVTYAGEEFGGKRPANFLDIGGGASAEVMANGLSIILGDPAVKSVFVNIFGGITSCDAVANGIVQALKIVGDVSTPLVVRLDGNNAEEGRRILAEANLPVVKPVDTMDGAAKLAAELAAAAA.

The ATP-grasp domain maps to 9 to 236 (KKLFAEHGVP…VAAVDPLEQK (228 aa)). Residues Lys45, 52-54 (GRG), Glu91, Ser94, and Glu99 contribute to the ATP site. 2 residues coordinate Mg(2+): Asn191 and Asp205. Residues Asn256 and 318–320 (GIT) contribute to the substrate site.

The protein belongs to the succinate/malate CoA ligase beta subunit family. Heterotetramer of two alpha and two beta subunits. Mg(2+) serves as cofactor.

The catalysed reaction is succinate + ATP + CoA = succinyl-CoA + ADP + phosphate. The enzyme catalyses GTP + succinate + CoA = succinyl-CoA + GDP + phosphate. It participates in carbohydrate metabolism; tricarboxylic acid cycle; succinate from succinyl-CoA (ligase route): step 1/1. In terms of biological role, succinyl-CoA synthetase functions in the citric acid cycle (TCA), coupling the hydrolysis of succinyl-CoA to the synthesis of either ATP or GTP and thus represents the only step of substrate-level phosphorylation in the TCA. The beta subunit provides nucleotide specificity of the enzyme and binds the substrate succinate, while the binding sites for coenzyme A and phosphate are found in the alpha subunit. The polypeptide is Succinate--CoA ligase [ADP-forming] subunit beta (Frankia casuarinae (strain DSM 45818 / CECT 9043 / HFP020203 / CcI3)).